The chain runs to 347 residues: Dihydroorotase (347 aa).

Positions 13 and 15 each coordinate Zn(2+). Residues 15 to 17 (HLR) and N41 contribute to the substrate site. Residues K99, H136, and H174 each coordinate Zn(2+). K99 is modified (N6-carboxylysine). Residue H136 participates in substrate binding. Substrate is bound at residue L219. D247 is a Zn(2+) binding site. D247 is a catalytic residue. 2 residues coordinate substrate: H251 and A263.

The protein belongs to the metallo-dependent hydrolases superfamily. DHOase family. Class II DHOase subfamily. In terms of assembly, homodimer. The cofactor is Zn(2+).

The catalysed reaction is (S)-dihydroorotate + H2O = N-carbamoyl-L-aspartate + H(+). Its pathway is pyrimidine metabolism; UMP biosynthesis via de novo pathway; (S)-dihydroorotate from bicarbonate: step 3/3. Functionally, catalyzes the reversible cyclization of carbamoyl aspartate to dihydroorotate. This Rhizobium meliloti (strain 1021) (Ensifer meliloti) protein is Dihydroorotase.